Consider the following 740-residue polypeptide: Probable type IV piliation system protein DR_0774 (740 aa).

An N-terminal signal peptide occupies residues 1-20; sequence MNKRHALLLTAVLGMATAYA.

This sequence belongs to the bacterial secretin family.

It is found in the cell envelope. In terms of biological role, could be part of the type IV piliation system (T4P). May contribute at the cohesion between the S-layer and the outer membrane by forming oligomers. Could also be the main channel through which trafficking is managed. The chain is Probable type IV piliation system protein DR_0774 from Deinococcus radiodurans (strain ATCC 13939 / DSM 20539 / JCM 16871 / CCUG 27074 / LMG 4051 / NBRC 15346 / NCIMB 9279 / VKM B-1422 / R1).